A 239-amino-acid chain; its full sequence is Urease accessory protein UreE (239 aa).

A disordered region spans residues 185 to 239; that stretch reads VASPLDEPHGSGLHIHGIHSHGDGHSHSHDSHSHSHDSDHGHSHSHGDHDHDHKH. Over residues 204–239 the composition is skewed to basic and acidic residues; that stretch reads SHGDGHSHSHDSHSHSHDSDHGHSHSHGDHDHDHKH.

Belongs to the UreE family.

It localises to the cytoplasm. Its function is as follows. Involved in urease metallocenter assembly. Binds nickel. Probably functions as a nickel donor during metallocenter assembly. The chain is Urease accessory protein UreE from Yersinia frederiksenii.